Consider the following 486-residue polypeptide: Cardiolipin synthase A (486 aa).

A run of 2 helical transmembrane segments spans residues 3-23 (TFYT…IASV) and 38-58 (MAWL…YLSF). 2 PLD phosphodiesterase domains span residues 219 to 246 (MDLR…VDPR) and 399 to 426 (EGGL…DMRS). Catalysis depends on residues His-224, Lys-226, Asp-231, His-404, Lys-406, and Asp-411.

Belongs to the phospholipase D family. Cardiolipin synthase subfamily. ClsA sub-subfamily.

The protein localises to the cell inner membrane. The enzyme catalyses 2 a 1,2-diacyl-sn-glycero-3-phospho-(1'-sn-glycerol) = a cardiolipin + glycerol. In terms of biological role, catalyzes the reversible phosphatidyl group transfer from one phosphatidylglycerol molecule to another to form cardiolipin (CL) (diphosphatidylglycerol) and glycerol. This chain is Cardiolipin synthase A, found in Edwardsiella ictaluri (strain 93-146).